Reading from the N-terminus, the 160-residue chain is SsrA-binding protein (160 aa).

It belongs to the SmpB family.

It localises to the cytoplasm. Functionally, required for rescue of stalled ribosomes mediated by trans-translation. Binds to transfer-messenger RNA (tmRNA), required for stable association of tmRNA with ribosomes. tmRNA and SmpB together mimic tRNA shape, replacing the anticodon stem-loop with SmpB. tmRNA is encoded by the ssrA gene; the 2 termini fold to resemble tRNA(Ala) and it encodes a 'tag peptide', a short internal open reading frame. During trans-translation Ala-aminoacylated tmRNA acts like a tRNA, entering the A-site of stalled ribosomes, displacing the stalled mRNA. The ribosome then switches to translate the ORF on the tmRNA; the nascent peptide is terminated with the 'tag peptide' encoded by the tmRNA and targeted for degradation. The ribosome is freed to recommence translation, which seems to be the essential function of trans-translation. The sequence is that of SsrA-binding protein from Salmonella agona (strain SL483).